A 466-amino-acid chain; its full sequence is Chromosomal replication initiator protein DnaA (466 aa).

The tract at residues 1 to 86 (MSLSLWQQCL…EVGTKPVTQT (86 aa)) is domain I, interacts with DnaA modulators. The segment at 86–129 (TLKTPVHNVVAPTQTTTAQPQRVAPAARSGWDNVPAPAEPTYRS) is domain II. Residues 130–346 (NVNVKHTFDN…GALNRVIANA (217 aa)) are domain III, AAA+ region. The ATP site is built by Gly174, Gly176, Lys177, and Thr178. The tract at residues 347-466 (NFTGRAITID…FSNLIRTLSS (120 aa)) is domain IV, binds dsDNA.

This sequence belongs to the DnaA family. As to quaternary structure, oligomerizes as a right-handed, spiral filament on DNA at oriC.

Its subcellular location is the cytoplasm. Plays an essential role in the initiation and regulation of chromosomal replication. ATP-DnaA binds to the origin of replication (oriC) to initiate formation of the DNA replication initiation complex once per cell cycle. Binds the DnaA box (a 9 base pair repeat at the origin) and separates the double-stranded (ds)DNA. Forms a right-handed helical filament on oriC DNA; dsDNA binds to the exterior of the filament while single-stranded (ss)DNA is stabiized in the filament's interior. The ATP-DnaA-oriC complex binds and stabilizes one strand of the AT-rich DNA unwinding element (DUE), permitting loading of DNA polymerase. After initiation quickly degrades to an ADP-DnaA complex that is not apt for DNA replication. Binds acidic phospholipids. In Salmonella gallinarum (strain 287/91 / NCTC 13346), this protein is Chromosomal replication initiator protein DnaA.